A 169-amino-acid polypeptide reads, in one-letter code: Large ribosomal subunit protein uL10 (169 aa).

Belongs to the universal ribosomal protein uL10 family. As to quaternary structure, part of the ribosomal stalk of the 50S ribosomal subunit. The N-terminus interacts with L11 and the large rRNA to form the base of the stalk. The C-terminus forms an elongated spine to which L12 dimers bind in a sequential fashion forming a multimeric L10(L12)X complex.

Functionally, forms part of the ribosomal stalk, playing a central role in the interaction of the ribosome with GTP-bound translation factors. The protein is Large ribosomal subunit protein uL10 of Orientia tsutsugamushi (strain Boryong) (Rickettsia tsutsugamushi).